Consider the following 404-residue polypeptide: Argininosuccinate synthase (404 aa).

ATP-binding positions include Ala-10–Ser-18 and Ala-37. Residues Tyr-88 and Ser-93 each coordinate L-citrulline. Gly-118 serves as a coordination point for ATP. L-aspartate contacts are provided by Thr-120, Asn-124, and Asp-125. Position 124 (Asn-124) interacts with L-citrulline. L-citrulline contacts are provided by Arg-128, Ser-179, Ser-188, Glu-264, and Tyr-276.

It belongs to the argininosuccinate synthase family. Type 1 subfamily. Homotetramer.

The protein resides in the cytoplasm. It catalyses the reaction L-citrulline + L-aspartate + ATP = 2-(N(omega)-L-arginino)succinate + AMP + diphosphate + H(+). The protein operates within amino-acid biosynthesis; L-arginine biosynthesis; L-arginine from L-ornithine and carbamoyl phosphate: step 2/3. This chain is Argininosuccinate synthase, found in Nitrosomonas europaea (strain ATCC 19718 / CIP 103999 / KCTC 2705 / NBRC 14298).